A 415-amino-acid polypeptide reads, in one-letter code: Gamma-glutamyl phosphate reductase (415 aa).

This sequence belongs to the gamma-glutamyl phosphate reductase family.

The protein localises to the cytoplasm. The enzyme catalyses L-glutamate 5-semialdehyde + phosphate + NADP(+) = L-glutamyl 5-phosphate + NADPH + H(+). Its pathway is amino-acid biosynthesis; L-proline biosynthesis; L-glutamate 5-semialdehyde from L-glutamate: step 2/2. In terms of biological role, catalyzes the NADPH-dependent reduction of L-glutamate 5-phosphate into L-glutamate 5-semialdehyde and phosphate. The product spontaneously undergoes cyclization to form 1-pyrroline-5-carboxylate. This Salmonella dublin (strain CT_02021853) protein is Gamma-glutamyl phosphate reductase.